We begin with the raw amino-acid sequence, 344 residues long: Aurora kinase B (344 aa).

Residue threonine 35 is modified to Phosphothreonine. The disordered stretch occupies residues 46–65 (NAQPTAAPGQKVVENSSGTP). Position 62 is a phosphoserine (serine 62). A Phosphothreonine modification is found at threonine 64. In terms of domain architecture, Protein kinase spans 77–327 (FEIGRPLGKG…LAQVSAHPWV (251 aa)). Residues 83-91 (LGKGKFGNV) and lysine 106 each bind ATP. The Proton acceptor role is filled by aspartate 200. At lysine 215 the chain carries N6-acetyllysine. Position 227 is a phosphoserine (serine 227). Threonine 232 carries the phosphothreonine; by autocatalysis modification.

It belongs to the protein kinase superfamily. Ser/Thr protein kinase family. Aurora subfamily. As to quaternary structure, component of the chromosomal passenger complex (CPC) composed of at least BIRC5/survivin, CDCA8/borealin, INCENP, AURKB or AURKC; predominantly independent AURKB- and AURKC-containing complexes exist. Associates with RACGAP1 during M phase. Interacts with SPDYC; this interaction may be required for proper localization of active, Thr-232-phosphorylated AURKB form during prometaphase and metaphase. Interacts with p53/TP53. Interacts (via the middle kinase domain) with NOC2L (via the N- and C-terminus domains). Interacts with CDCA1. Interacts with EVI5. Interacts with JTB. Interacts with NDC80. Interacts with PSMA3. Interacts with RNF2/RING1B. Interacts with SEPTIN1. Interacts with SIRT2. Interacts with TACC1. Interacts with TTC28. Post-translationally, the phosphorylation of Thr-232 requires the binding to INCENP and occurs by means of an autophosphorylation mechanism. Thr-232 phosphorylation is indispensable for the AURKB kinase activity. In terms of processing, acetylated at Lys-215 by KAT5 at kinetochores, increasing AURKB activity and promoting accurate chromosome segregation in mitosis. Ubiquitinated by different BCR (BTB-CUL3-RBX1) E3 ubiquitin ligase complexes. Ubiquitinated by the BCR(KLHL9-KLHL13) E3 ubiquitin ligase complex, ubiquitination leads to removal from mitotic chromosomes and is required for cytokinesis. During anaphase, the BCR(KLHL21) E3 ubiquitin ligase complex recruits the CPC complex from chromosomes to the spindle midzone and mediates the ubiquitination of AURKB. Ubiquitination of AURKB by BCR(KLHL21) E3 ubiquitin ligase complex may not lead to its degradation by the proteasome. Deubiquitinated by USP35; inhibiting CDH1-mediated degradation of AURKB.

The protein localises to the nucleus. The protein resides in the chromosome. It localises to the centromere. Its subcellular location is the kinetochore. It is found in the cytoplasm. The protein localises to the cytoskeleton. The protein resides in the spindle. It localises to the midbody. The catalysed reaction is L-seryl-[protein] + ATP = O-phospho-L-seryl-[protein] + ADP + H(+). It carries out the reaction L-threonyl-[protein] + ATP = O-phospho-L-threonyl-[protein] + ADP + H(+). Its activity is regulated as follows. Activity is greatly increased when AURKB is within the CPC complex. In particular, AURKB-phosphorylated INCENP acts as an activator of AURKB. Positive feedback between HASPIN and AURKB contributes to CPC localization. Functionally, serine/threonine-protein kinase component of the chromosomal passenger complex (CPC), a complex that acts as a key regulator of mitosis. The CPC complex has essential functions at the centromere in ensuring correct chromosome alignment and segregation and is required for chromatin-induced microtubule stabilization and spindle assembly. Involved in the bipolar attachment of spindle microtubules to kinetochores and is a key regulator for the onset of cytokinesis during mitosis. Required for central/midzone spindle assembly and cleavage furrow formation. Key component of the cytokinesis checkpoint, a process required to delay abscission to prevent both premature resolution of intercellular chromosome bridges and accumulation of DNA damage: phosphorylates CHMP4C, leading to retain abscission-competent VPS4 (VPS4A and/or VPS4B) at the midbody ring until abscission checkpoint signaling is terminated at late cytokinesis. AURKB phosphorylates the CPC complex subunits BIRC5/survivin, CDCA8/borealin and INCENP. Phosphorylation of INCENP leads to increased AURKB activity. Other known AURKB substrates involved in centromeric functions and mitosis are CENPA, DES/desmin, GPAF, KIF2C, NSUN2, RACGAP1, SEPTIN1, VIM/vimentin, HASPIN, and histone H3. A positive feedback loop involving HASPIN and AURKB contributes to localization of CPC to centromeres. Phosphorylation of VIM controls vimentin filament segregation in cytokinetic process, whereas histone H3 is phosphorylated at 'Ser-10' and 'Ser-28' during mitosis (H3S10ph and H3S28ph, respectively). AURKB is also required for kinetochore localization of BUB1 and SGO1. Phosphorylation of p53/TP53 negatively regulates its transcriptional activity. Key regulator of active promoters in resting B- and T-lymphocytes: acts by mediating phosphorylation of H3S28ph at active promoters in resting B-cells, inhibiting RNF2/RING1B-mediated ubiquitination of histone H2A and enhancing binding and activity of the USP16 deubiquitinase at transcribed genes. Acts as an inhibitor of CGAS during mitosis: catalyzes phosphorylation of the N-terminus of CGAS during the G2-M transition, blocking CGAS liquid phase separation and activation, and thereby preventing CGAS-induced autoimmunity. Phosphorylates KRT5 during anaphase and telophase. Phosphorylates ATXN10 which promotes phosphorylation of ATXN10 by PLK1 and may play a role in the regulation of cytokinesis and stimulating the proteasomal degradation of ATXN10. This Bos taurus (Bovine) protein is Aurora kinase B (AURKB).